Here is a 97-residue protein sequence, read N- to C-terminus: Large ribosomal subunit protein uL23 (97 aa).

Belongs to the universal ribosomal protein uL23 family. As to quaternary structure, part of the 50S ribosomal subunit. Contacts protein L29, and trigger factor when it is bound to the ribosome.

Its function is as follows. One of the early assembly proteins it binds 23S rRNA. One of the proteins that surrounds the polypeptide exit tunnel on the outside of the ribosome. Forms the main docking site for trigger factor binding to the ribosome. The polypeptide is Large ribosomal subunit protein uL23 (Clostridium perfringens (strain SM101 / Type A)).